A 1325-amino-acid polypeptide reads, in one-letter code: ATP-binding cassette sub-family C member 4 (1325 aa).

The 286-residue stretch at 92–377 (YLVLGIFTLI…FFPSAIERVS (286 aa)) folds into the ABC transmembrane type-1 1 domain. 7 helical membrane-spanning segments follow: residues 93–113 (LVLGIFTLIEESAKVIQPIFL), 136–156 (AYATVLTFCTLILAILHHLYF), 207–227 (QVTVFLHFLWAGPLQAIAVTA), 228–248 (LLWMEIGISCLAGMAVLIILL), 328–348 (SKIIVFVTFTTYVLLGSVITA), 351–371 (VFVAVTLYGAVRLTVTLFFPS), and 440–460 (LLAVVGPVGAGKSSLLSAVLG). Positions 410–633 (VHVQDFTAFW…GIDFGSLLKK (224 aa)) constitute an ABC transporter 1 domain. 445–452 (GPVGAGKS) is an ATP binding site. A phosphothreonine mark is found at T646 and T648. The segment covering 657 to 667 (SSVWSQQSSRP) has biased composition (low complexity). Positions 657-688 (SSVWSQQSSRPSLKDGALESQDTENVPVTLSE) are disordered. 2 positions are modified to phosphoserine: S664 and S668. Residues 710 to 730 (HWIVFIFLILLNTAAQVAYVL) form a helical membrane-spanning segment. The ABC transmembrane type-1 2 domain maps to 714–1005 (FIFLILLNTA…CVRQSAEVEN (292 aa)). N746 and N754 each carry an N-linked (GlcNAc...) asparagine glycan. A run of 6 helical transmembrane segments spans residues 771–791 (LTVATVLFGIARSLLVFYVLV), 836–856 (LPLTFLDFIQTLLQVVGVVSV), 858–878 (VAVIPWIAIPLVPLGIIFIFL), 954–974 (AICAMFVIIVAFGSLILAKTL), 977–997 (GQVGLALSYALTLMGMFQWCV), and 1038–1058 (EGVIIFDNVNFMYSPGGPLVL). Residues 1041–1274 (IIFDNVNFMY…KESLFYKMVQ (234 aa)) enclose the ABC transporter 2 domain. ATP is bound at residue 1075 to 1082 (GRTGAGKS). Positions 1322–1325 (ETAL) match the PDZ-binding motif.

It belongs to the ABC transporter superfamily. ABCC family. Conjugate transporter (TC 3.A.1.208) subfamily. As to quaternary structure, interacts (via PDZ-binding motif) with SNX27 (via PDZ domain); this interaction accelerates MRP4 internalization. Mg(2+) is required as a cofactor. N-glycosylated; leading to substrate-selective effects on its transport activity. In terms of tissue distribution, widely expressed, with particularly high levels in prostate, but is barely detectable in liver. sinusoidal membrane of hepatocytes.

The protein localises to the basolateral cell membrane. It localises to the apical cell membrane. It carries out the reaction ATP + H2O + xenobioticSide 1 = ADP + phosphate + xenobioticSide 2.. The catalysed reaction is an S-substituted glutathione(in) + ATP + H2O = an S-substituted glutathione(out) + ADP + phosphate + H(+). The enzyme catalyses 17beta-estradiol 17-O-(beta-D-glucuronate)(in) + ATP + H2O = 17beta-estradiol 17-O-(beta-D-glucuronate)(out) + ADP + phosphate + H(+). It catalyses the reaction dehydroepiandrosterone 3-sulfate(in) + ATP + H2O = dehydroepiandrosterone 3-sulfate(out) + ADP + phosphate + H(+). It carries out the reaction leukotriene C4(in) + ATP + H2O = leukotriene C4(out) + ADP + phosphate + H(+). The catalysed reaction is leukotriene B4(in) + ATP + H2O = leukotriene B4(out) + ADP + phosphate + H(+). The enzyme catalyses urate(in) + ATP + H2O = urate(out) + ADP + phosphate + H(+). It catalyses the reaction 3',5'-cyclic GMP(in) + ATP + H2O = 3',5'-cyclic GMP(out) + ADP + phosphate + H(+). It carries out the reaction 3',5'-cyclic AMP(in) + ATP + H2O = 3',5'-cyclic AMP(out) + ADP + phosphate + H(+). The catalysed reaction is prostaglandin E2(in) + ATP + H2O = prostaglandin E2(out) + ADP + phosphate + H(+). The enzyme catalyses prostaglandin E1(in) + ATP + H2O = prostaglandin E1(out) + ADP + phosphate + H(+). It catalyses the reaction glycodeoxycholate(in) + glutathione(in) + ATP + H2O = glycodeoxycholate(out) + glutathione(out) + ADP + phosphate + H(+). It carries out the reaction cholate(in) + glutathione(in) + ATP + H2O = cholate(out) + glutathione(out) + ADP + phosphate + H(+). The catalysed reaction is glycocholate(in) + glutathione(in) + ATP + H2O = glycocholate(out) + glutathione(out) + ADP + phosphate + H(+). The enzyme catalyses taurocholate(in) + glutathione(in) + ATP + H2O = taurocholate(out) + glutathione(out) + ADP + phosphate + H(+). It catalyses the reaction glycochenodeoxycholate(in) + glutathione(in) + ATP + H2O = glycochenodeoxycholate(out) + glutathione(out) + ADP + phosphate + H(+). It carries out the reaction taurochenodeoxycholate(in) + glutathione(in) + ATP + H2O = taurochenodeoxycholate(out) + glutathione(out) + ADP + phosphate + H(+). The catalysed reaction is glycoursodeoxycholate(in) + glutathione(in) + ATP + H2O = glycoursodeoxycholate(out) + glutathione(out) + ADP + phosphate + H(+). The enzyme catalyses tauroursodeoxycholate(in) + glutathione(in) + ATP + H2O = tauroursodeoxycholate(out) + glutathione(out) + ADP + phosphate + H(+). Its activity is regulated as follows. GSH stimulates the transport of MRP4. Urate inhibits methotrexate transport but stimulates cGMP transport. Nonsteroidal anti-inflammatory drugs (NSAIDs) strongly suppress the transport of MRP4 substrates. Its function is as follows. ATP-dependent transporter of the ATP-binding cassette (ABC) family that actively extrudes physiological compounds and xenobiotics from cells. Transports a range of endogenous molecules that have a key role in cellular communication and signaling, including cyclic nucleotides such as cyclic AMP (cAMP) and cyclic GMP (cGMP), bile acids, steroid conjugates, urate, and prostaglandins. Mediates the ATP-dependent efflux of glutathione conjugates such as leukotriene C4 (LTC4) and leukotriene B4 (LTB4) too. The presence of GSH is necessary for the ATP-dependent transport of LTB4, whereas GSH is not required for the transport of LTC4. Mediates the cotransport of bile acids with reduced glutathione (GSH). Transports a wide range of drugs and their metabolites, including anticancer, antiviral and antibiotics molecules. Confers resistance to anticancer agents such as methotrexate. This Homo sapiens (Human) protein is ATP-binding cassette sub-family C member 4 (ABCC4).